The following is a 240-amino-acid chain: Sugar fermentation stimulation protein homolog (240 aa).

It belongs to the SfsA family.

This is Sugar fermentation stimulation protein homolog from Crocosphaera subtropica (strain ATCC 51142 / BH68) (Cyanothece sp. (strain ATCC 51142)).